The primary structure comprises 360 residues: Alpha-2-macroglobulin receptor-associated protein (360 aa).

The N-terminal stretch at 1–28 (MAPRRERVSTLPRLQLLVLLLLPLMLVP) is a signal peptide. Phosphoserine occurs at positions 53 and 138. A coiled-coil region spans residues 184-302 (EKIQEYNVLL…KHNHYQKQLE (119 aa)). The LDL receptor binding stretch occupies residues 240–356 (RLRKVSHQGY…DLSSRVSRAR (117 aa)). N-linked (GlcNAc...) asparagine glycosylation occurs at N271. Positions 357–360 (HNEL) match the Prevents secretion from ER motif.

It belongs to the alpha-2-MRAP family. Interacts with the LRP1/alpha-2-macroglobulin receptor heavy and light chains; the interaction is transient and coincides with a reduction of ligand binding by the receptor. Interacts with LRP2/glycoprotein 330. Interacts with LRP1B; binding is followed by internalization and degradation. Interacts with LDLR. Interacts with SORL1. Interacts with LRP1; this interaction is followed by rapid internalization. Post-translationally, N-glycosylated. Highly expressed in PYS-2 parietal endoderm cells and in the kidney. The RNA level increased about 10-fold during differentiation of F9 embryonal carcinoma cells to parietal endoderm cells.

It localises to the rough endoplasmic reticulum lumen. The protein localises to the endoplasmic reticulum-Golgi intermediate compartment lumen. The protein resides in the golgi apparatus. It is found in the cis-Golgi network. Its subcellular location is the golgi apparatus lumen. It localises to the endosome lumen. The protein localises to the cell surface. Its function is as follows. Molecular chaperone for LDL receptor-related proteins that may regulate their ligand binding activity along the secretory pathway. The sequence is that of Alpha-2-macroglobulin receptor-associated protein (Lrpap1) from Mus musculus (Mouse).